Consider the following 169-residue polypeptide: NAD(P)H-quinone oxidoreductase subunit J, chloroplastic (169 aa).

It belongs to the complex I 30 kDa subunit family. As to quaternary structure, NDH is composed of at least 16 different subunits, 5 of which are encoded in the nucleus.

The protein resides in the plastid. It localises to the chloroplast thylakoid membrane. The catalysed reaction is a plastoquinone + NADH + (n+1) H(+)(in) = a plastoquinol + NAD(+) + n H(+)(out). It carries out the reaction a plastoquinone + NADPH + (n+1) H(+)(in) = a plastoquinol + NADP(+) + n H(+)(out). In terms of biological role, NDH shuttles electrons from NAD(P)H:plastoquinone, via FMN and iron-sulfur (Fe-S) centers, to quinones in the photosynthetic chain and possibly in a chloroplast respiratory chain. The immediate electron acceptor for the enzyme in this species is believed to be plastoquinone. Couples the redox reaction to proton translocation, and thus conserves the redox energy in a proton gradient. The chain is NAD(P)H-quinone oxidoreductase subunit J, chloroplastic from Anthoceros angustus (Hornwort).